The sequence spans 177 residues: tRNA (cytidine(56)-2'-O)-methyltransferase (177 aa).

S-adenosyl-L-methionine is bound by residues Leu-84 and Gly-109–Val-113.

The protein belongs to the aTrm56 family. Homodimer.

Its subcellular location is the cytoplasm. It carries out the reaction cytidine(56) in tRNA + S-adenosyl-L-methionine = 2'-O-methylcytidine(56) in tRNA + S-adenosyl-L-homocysteine + H(+). Specifically catalyzes the AdoMet-dependent 2'-O-ribose methylation of cytidine at position 56 in tRNAs. In Methanosarcina mazei (strain ATCC BAA-159 / DSM 3647 / Goe1 / Go1 / JCM 11833 / OCM 88) (Methanosarcina frisia), this protein is tRNA (cytidine(56)-2'-O)-methyltransferase.